Reading from the N-terminus, the 168-residue chain is Coiled-coil domain-containing protein 200 (168 aa).

The stretch at 16 to 50 (LDRRRWLMAQQQQELQQKEQELKNHQEEEQQSEEK) forms a coiled coil. Positions 23-168 (MAQQQQELQQ…LKSTNYIQQW (146 aa)) are disordered. The span at 31–52 (QQKEQELKNHQEEEQQSEEKLQ) shows a compositional bias: basic and acidic residues. Low complexity predominate over residues 70 to 82 (SQEQPQPSQQQPS). Pro residues-rich tracts occupy residues 83–94 (VQPPSQPPPQPS) and 104–117 (GPQP…PQPT). 2 stretches are compositionally biased toward polar residues: residues 124–138 (RCTQ…QDSQ) and 145–168 (PCQS…IQQW).

The protein is Coiled-coil domain-containing protein 200 of Homo sapiens (Human).